The chain runs to 223 residues: Thiamine-phosphate synthase (223 aa).

4-amino-2-methyl-5-(diphosphooxymethyl)pyrimidine is bound by residues 42-46 (QLRDK) and N83. Residues D84 and D103 each coordinate Mg(2+). S122 lines the 4-amino-2-methyl-5-(diphosphooxymethyl)pyrimidine pocket. Position 148–150 (148–150 (TPT)) interacts with 2-[(2R,5Z)-2-carboxy-4-methylthiazol-5(2H)-ylidene]ethyl phosphate. K151 is a binding site for 4-amino-2-methyl-5-(diphosphooxymethyl)pyrimidine. G179 is a 2-[(2R,5Z)-2-carboxy-4-methylthiazol-5(2H)-ylidene]ethyl phosphate binding site.

The protein belongs to the thiamine-phosphate synthase family. Requires Mg(2+) as cofactor.

It catalyses the reaction 2-[(2R,5Z)-2-carboxy-4-methylthiazol-5(2H)-ylidene]ethyl phosphate + 4-amino-2-methyl-5-(diphosphooxymethyl)pyrimidine + 2 H(+) = thiamine phosphate + CO2 + diphosphate. The enzyme catalyses 2-(2-carboxy-4-methylthiazol-5-yl)ethyl phosphate + 4-amino-2-methyl-5-(diphosphooxymethyl)pyrimidine + 2 H(+) = thiamine phosphate + CO2 + diphosphate. It carries out the reaction 4-methyl-5-(2-phosphooxyethyl)-thiazole + 4-amino-2-methyl-5-(diphosphooxymethyl)pyrimidine + H(+) = thiamine phosphate + diphosphate. The protein operates within cofactor biosynthesis; thiamine diphosphate biosynthesis; thiamine phosphate from 4-amino-2-methyl-5-diphosphomethylpyrimidine and 4-methyl-5-(2-phosphoethyl)-thiazole: step 1/1. Condenses 4-methyl-5-(beta-hydroxyethyl)thiazole monophosphate (THZ-P) and 2-methyl-4-amino-5-hydroxymethyl pyrimidine pyrophosphate (HMP-PP) to form thiamine monophosphate (TMP). This Mycolicibacterium paratuberculosis (strain ATCC BAA-968 / K-10) (Mycobacterium paratuberculosis) protein is Thiamine-phosphate synthase.